A 147-amino-acid polypeptide reads, in one-letter code: Cyanate hydratase (147 aa).

Catalysis depends on residues Arg88, Glu91, and Ser114.

It belongs to the cyanase family.

The catalysed reaction is cyanate + hydrogencarbonate + 3 H(+) = NH4(+) + 2 CO2. Functionally, catalyzes the reaction of cyanate with bicarbonate to produce ammonia and carbon dioxide. This chain is Cyanate hydratase, found in Methylibium petroleiphilum (strain ATCC BAA-1232 / LMG 22953 / PM1).